The chain runs to 360 residues: 3-dehydroquinate synthase (360 aa).

NAD(+) contacts are provided by residues 71-76 (DGEQYK), 105-109 (GVIGD), 129-130 (TT), lysine 142, lysine 151, and 169-172 (CLDT). Residues glutamate 184, histidine 247, and histidine 264 each coordinate Zn(2+).

This sequence belongs to the sugar phosphate cyclases superfamily. Dehydroquinate synthase family. It depends on Co(2+) as a cofactor. Zn(2+) is required as a cofactor. NAD(+) serves as cofactor.

Its subcellular location is the cytoplasm. It catalyses the reaction 7-phospho-2-dehydro-3-deoxy-D-arabino-heptonate = 3-dehydroquinate + phosphate. It participates in metabolic intermediate biosynthesis; chorismate biosynthesis; chorismate from D-erythrose 4-phosphate and phosphoenolpyruvate: step 2/7. Catalyzes the conversion of 3-deoxy-D-arabino-heptulosonate 7-phosphate (DAHP) to dehydroquinate (DHQ). The chain is 3-dehydroquinate synthase from Erwinia tasmaniensis (strain DSM 17950 / CFBP 7177 / CIP 109463 / NCPPB 4357 / Et1/99).